The chain runs to 406 residues: MRNIIVKKLDVEPIEERPTEIVERKGLGHPDSICDGIAESVSRALCKMYMEKFGTILHHNTDQVELVGGHAYPKFGGGVMVSPIYILLSGRATMEILDKEKNEVIKLPVGTTAVKAAKEYLKKVLRNVDVDKDVIIDCRIGQGSMDLVDVFERQKNEVPLANDTSFGVGYAPLSTTERLVLETERFLNSDELKNEIPAVGEDIKVMGLREGKKITLTIAMAVVDRYVKNIEEYKEVIEKVRKKVEDLAKKIADGYEVEIHINTADDYERESVYLTVTGTSAEMGDDGSVGRGNRVNGLITPFRPMSMEAASGKNPVNHVGKIYNILANLIANDIAKLEGVKECYVRILSQIGKPINEPKALDIEIITEDSYDIKDIEPKAKEIANKWLDNIMEVQKMIVEGKVTTF.

141-146 (GQGSMD) is a binding site for ATP.

It belongs to the AdoMet synthase 2 family. As to quaternary structure, homodimer. Requires Mg(2+) as cofactor.

The enzyme catalyses L-methionine + ATP + H2O = S-adenosyl-L-methionine + phosphate + diphosphate. The protein operates within amino-acid biosynthesis; S-adenosyl-L-methionine biosynthesis; S-adenosyl-L-methionine from L-methionine: step 1/1. Functionally, catalyzes the formation of S-adenosylmethionine from methionine and ATP. The chain is S-adenosylmethionine synthase (mat) from Methanocaldococcus jannaschii (strain ATCC 43067 / DSM 2661 / JAL-1 / JCM 10045 / NBRC 100440) (Methanococcus jannaschii).